The following is a 457-amino-acid chain: Bifunctional protein GlmU (457 aa).

The interval 1–230 (MPLSLPLHIV…AREVEGVNDL (230 aa)) is pyrophosphorylase. Residues 12 to 15 (LAAG), lysine 26, glutamine 78, 83 to 84 (GT), 105 to 107 (YGD), glycine 140, glutamate 155, asparagine 170, and asparagine 228 contribute to the UDP-N-acetyl-alpha-D-glucosamine site. Aspartate 107 contacts Mg(2+). Asparagine 228 contributes to the Mg(2+) binding site. A linker region spans residues 231-251 (WQLTQLERAWQIRAARALCLQ). The N-acetyltransferase stretch occupies residues 252–457 (GARVADPARL…DSWQRPKKKT (206 aa)). UDP-N-acetyl-alpha-D-glucosamine is bound by residues arginine 334 and lysine 352. Catalysis depends on histidine 364, which acts as the Proton acceptor. UDP-N-acetyl-alpha-D-glucosamine contacts are provided by tyrosine 367 and asparagine 378. Acetyl-CoA contacts are provided by residues alanine 381, 387–388 (NY), serine 406, alanine 424, and arginine 441.

In the N-terminal section; belongs to the N-acetylglucosamine-1-phosphate uridyltransferase family. It in the C-terminal section; belongs to the transferase hexapeptide repeat family. As to quaternary structure, homotrimer. Mg(2+) serves as cofactor.

It localises to the cytoplasm. The enzyme catalyses alpha-D-glucosamine 1-phosphate + acetyl-CoA = N-acetyl-alpha-D-glucosamine 1-phosphate + CoA + H(+). It catalyses the reaction N-acetyl-alpha-D-glucosamine 1-phosphate + UTP + H(+) = UDP-N-acetyl-alpha-D-glucosamine + diphosphate. It functions in the pathway nucleotide-sugar biosynthesis; UDP-N-acetyl-alpha-D-glucosamine biosynthesis; N-acetyl-alpha-D-glucosamine 1-phosphate from alpha-D-glucosamine 6-phosphate (route II): step 2/2. The protein operates within nucleotide-sugar biosynthesis; UDP-N-acetyl-alpha-D-glucosamine biosynthesis; UDP-N-acetyl-alpha-D-glucosamine from N-acetyl-alpha-D-glucosamine 1-phosphate: step 1/1. Its pathway is bacterial outer membrane biogenesis; LPS lipid A biosynthesis. Functionally, catalyzes the last two sequential reactions in the de novo biosynthetic pathway for UDP-N-acetylglucosamine (UDP-GlcNAc). The C-terminal domain catalyzes the transfer of acetyl group from acetyl coenzyme A to glucosamine-1-phosphate (GlcN-1-P) to produce N-acetylglucosamine-1-phosphate (GlcNAc-1-P), which is converted into UDP-GlcNAc by the transfer of uridine 5-monophosphate (from uridine 5-triphosphate), a reaction catalyzed by the N-terminal domain. The sequence is that of Bifunctional protein GlmU from Xylella fastidiosa (strain 9a5c).